Here is a 320-residue protein sequence, read N- to C-terminus: Lipoyl synthase (320 aa).

Cys56, Cys61, Cys67, Cys82, Cys86, Cys89, and Ser295 together coordinate [4Fe-4S] cluster. One can recognise a Radical SAM core domain in the interval 68 to 284 (WNRRTATFMI…REEALKRGFA (217 aa)). The tract at residues 300–320 (EQSAQAVARRTGAGRAAQTGD) is disordered. Residues 303-320 (AQAVARRTGAGRAAQTGD) are compositionally biased toward low complexity.

This sequence belongs to the radical SAM superfamily. Lipoyl synthase family. The cofactor is [4Fe-4S] cluster.

It is found in the cytoplasm. The enzyme catalyses [[Fe-S] cluster scaffold protein carrying a second [4Fe-4S](2+) cluster] + N(6)-octanoyl-L-lysyl-[protein] + 2 oxidized [2Fe-2S]-[ferredoxin] + 2 S-adenosyl-L-methionine + 4 H(+) = [[Fe-S] cluster scaffold protein] + N(6)-[(R)-dihydrolipoyl]-L-lysyl-[protein] + 4 Fe(3+) + 2 hydrogen sulfide + 2 5'-deoxyadenosine + 2 L-methionine + 2 reduced [2Fe-2S]-[ferredoxin]. The protein operates within protein modification; protein lipoylation via endogenous pathway; protein N(6)-(lipoyl)lysine from octanoyl-[acyl-carrier-protein]: step 2/2. Catalyzes the radical-mediated insertion of two sulfur atoms into the C-6 and C-8 positions of the octanoyl moiety bound to the lipoyl domains of lipoate-dependent enzymes, thereby converting the octanoylated domains into lipoylated derivatives. The polypeptide is Lipoyl synthase (Symbiobacterium thermophilum (strain DSM 24528 / JCM 14929 / IAM 14863 / T)).